We begin with the raw amino-acid sequence, 141 residues long: Relaxin-3 (141 aa).

A signal peptide spans 1–24; the sequence is MAMLGLLLLASWALLGALGLQAEA. 3 disulfides stabilise this stretch: cysteine 34–cysteine 128, cysteine 46–cysteine 141, and cysteine 127–cysteine 132. Residues 54-117 constitute a propeptide, connecting peptide; the sequence is ADILAHESLG…GSPGVVRGSR (64 aa).

It belongs to the insulin family. Heterodimer of a B chain and an A chain linked by two disulfide bonds. As to expression, high expression in the brain localized to the pons/medulla with highest levels in pars ventromedialis of the dorsal tegmental nucleus. Significant expression is also detected in the spleen, thymus, lung, testis and ovary.

It localises to the secreted. May play a role in neuropeptide signaling processes. Ligand for LGR7, relaxin-3 receptor-1 and relaxin-3 receptor-2. In Mus musculus (Mouse), this protein is Relaxin-3 (Rln3).